We begin with the raw amino-acid sequence, 59 residues long: U-myrmeciitoxin(01)-Mg5b (59 aa).

Residues 1 to 21 form the signal peptide; that stretch reads MRLSYLSLALAIIFVLTIMHA. The propeptide occupies 22–38; it reads SNVEAKASADPEPDAVG.

Expressed by the venom gland.

The protein localises to the secreted. Its function is as follows. May have antimicrobial properties, like most ant linear peptides. The polypeptide is U-myrmeciitoxin(01)-Mg5b (Myrmecia gulosa (Red bulldog ant)).